Reading from the N-terminus, the 142-residue chain is Probable signal recognition particle 19 kDa protein (142 aa).

The segment at Lys115–Lys142 is disordered. Over residues Ala123–Gly135 the composition is skewed to low complexity.

The protein belongs to the SRP19 family. In terms of assembly, component of a signal recognition particle complex that consists of a 7SL RNA molecule of 300 nucleotides and six protein subunits: srpa-72, srpa-68, SRP54, F37F2.2/SRP19, F25G6.8/SRP14 and ZK512.4/SRP9.

Its subcellular location is the cytoplasm. The protein resides in the nucleus. The protein localises to the nucleolus. Component of the signal recognition particle (SRP) complex, a ribonucleoprotein complex that mediates the cotranslational targeting of secretory and membrane proteins to the endoplasmic reticulum (ER). Binds directly to 7SL RNA. Mediates binding of SRP54 to the SRP complex. In Caenorhabditis elegans, this protein is Probable signal recognition particle 19 kDa protein.